We begin with the raw amino-acid sequence, 1490 residues long: MADADTSSNSSKTNEDRSQEGFGTYQGYTDRVASEVQELARIISHASIQQLKLKRQHSRQESQKSNEQESELSGKLGVIPVDENGNFVDQRLNPNSPEFNAAYWIQNAHKLVSSDIDYFKPVTIGVAYKNLRAYGSASDADYQSTLVNLIPKYLSLFFREYILRHTGPTFDILKPMDGLIKPGELTVVLGRPGAGCSTFLKTIASQTYGYHIDKDSVIRYNSLTPHEIKKHYRGEVVYCAETENHFPQLTVGDTLEFAAKMRTPQNRPLGVSRDAYARHLAAVVMAVYGLSHTRNTKVGNDFIRGVSGGERKRVSIAEITLNNAMVQCWDNSTRGLDSATALEFIRALKASADIVHTTPLVAIYQCSQDAYDLFDKVVLMYQGYQIYFGSAKKAKQYFIDMGYECPQRQTTADFLTSLTNPAERIVRQGFEGKVPQTPQEFYEYWKKSPEGQQIVADVDQYLTEHSSAAEKEAIKEAHQARQSDHLKPASPYTVSFFMQVRYIAHRNILRIKGNPSIHLFQIFGNIGMSFILSSIFYNLPTATSSFYHRTAALFFAVLFNAFSCLLEIFSLYEARSIVEKHKKYALYHPAADAFASIVTELPTKFIIAIGFNLVYYFMVNFRRTPGNFFFYLLINFSATLAMSHIFRTIGAATKTLQEAMTPAAILLLALTIFTGFVIPTPNMHGWCRWINYLDPLAYAFESLIANEFHNRDFECSQYVPSGGSYPTAGPNRICTPVGSVPGQDFVDGTRYMEMSFDYRNSHKWRNFGIVIGFIVFFFCTYILLCEINKGAMQKGEILLFQQRALKKRKKANNDIESGEIEKVTPEFDNEYENNQDKMLQSGGDTFFWRDLTYQVKIKSEDRVILDHVSGWVKPGQVTALMGASGAGKTTLLNALSDRLTTGVVTEGIRLVNGRPLDSSFQRSIGYVQQQDLHLETSTVREALEFAAYLRQPKSVSRKEKNEYVDYIIRLLEMEQYADAVVGVSGEGLNVEQRKRLSIGVELVAKPKLLVFLDEPTSGLDSQTAWSICKLIRKLADNGQAILCTIHQPSAILLAEFDRLLFLQRGGQTVYFGDLGKNFTTLINYFEKYGAPKCPPEANPAEWMLEVIGAAPGSKANQDYYDVWLKSSEFQEMNSELDLMSEELVKKPLDDDPDRLKPYAAPYWEQYLFVTKRVFEQNWRTPSYLYSKFLLVVTSSLFNGFSFYKADRSLQGLQNQMFSVFMFLVILHTLIQQYLPTFVSQRDLYEVRERPSKTFSWITFIAAQVTAEIPWNIICGTLGYFCWYYPVGLYQNATYTNTVHQRGAFMWFAIVLFFIYTSTLAQLCISFLEIDDNAANLSVLLFTMCLAFCGVLVTKEQLPGFWVFMYRCSPFTYLVSVMLSVGLVDAPVTCAAKEYLRFSPPQGYTCMQYMEPYMKVAGGYLLNENSTTECEFCTMKVTNVFLKMIGSDYSKRGRDIGIYIAFIGINIIGTFILYWFARVPKNFDIKLRRKR.

A compositionally biased stretch (polar residues) spans 1–12 (MADADTSSNSSK). 2 disordered regions span residues 1 to 26 (MADA…GTYQ) and 53 to 75 (LKRQ…LSGK). Topologically, residues 1–516 (MADADTSSNS…NILRIKGNPS (516 aa)) are cytoplasmic. The segment covering 58-67 (SRQESQKSNE) has biased composition (basic and acidic residues). The ABC transporter 1 domain occupies 151–407 (PKYLSLFFRE…FIDMGYECPQ (257 aa)). A run of 6 helical transmembrane segments spans residues 517–537 (IHLF…SIFY), 551–571 (AALF…IFSL), 601–621 (LPTK…MVNF), 626–646 (GNFF…SHIF), 659–679 (AMTP…FVIP), and 767–787 (FGIV…LCEI). The Cytoplasmic portion of the chain corresponds to 788–1182 (NKGAMQKGEI…VFEQNWRTPS (395 aa)). The region spanning 846-1090 (FFWRDLTYQV…LINYFEKYGA (245 aa)) is the ABC transporter 2 domain. Residue 882-889 (GASGAGKT) participates in ATP binding. 3 consecutive transmembrane segments (helical) span residues 1183 to 1203 (YLYS…FSFY), 1217 to 1237 (FSVF…LPTF), and 1268 to 1288 (IPWN…PVGL). The N-linked (GlcNAc...) asparagine glycan is linked to Asn1291. 3 helical membrane-spanning segments follow: residues 1304 to 1324 (FMWF…QLCI), 1333 to 1353 (AANL…VLVT), and 1370 to 1390 (FTYL…VTCA). Asn1424 carries an N-linked (GlcNAc...) asparagine glycan. Residues 1455–1475 (IGIYIAFIGINIIGTFILYWF) form a helical membrane-spanning segment.

This sequence belongs to the ABC transporter superfamily. ABCG family. PDR (TC 3.A.1.205) subfamily.

It is found in the membrane. The polypeptide is ABC transporter CDR4 (CDR4) (Candida albicans (Yeast)).